A 421-amino-acid chain; its full sequence is ATP-dependent RNA helicase RhlB (421 aa).

The Q motif motif lies at 9-37 (QKFSDFSLHPKVVEALEKKGFHNCTPIQA). Residues 40-219 (LPLTLAGRDV…FEQMNNAEYI (180 aa)) form the Helicase ATP-binding domain. 53 to 60 (AQTGTGKT) contacts ATP. The DEAD box motif lies at 165-168 (DEAD). The Helicase C-terminal domain occupies 245–390 (RLLQTLIEEE…VSKYNPDALM (146 aa)). Residues 392 to 421 (DLPKPLRLTRPRTGNGPRRTGAPRNRRRSG) form a disordered region. Positions 402 to 414 (PRTGNGPRRTGAP) are enriched in low complexity.

Belongs to the DEAD box helicase family. RhlB subfamily. In terms of assembly, component of the RNA degradosome, which is a multiprotein complex involved in RNA processing and mRNA degradation.

It localises to the cytoplasm. It carries out the reaction ATP + H2O = ADP + phosphate + H(+). Its function is as follows. DEAD-box RNA helicase involved in RNA degradation. Has RNA-dependent ATPase activity and unwinds double-stranded RNA. In Shigella dysenteriae serotype 1 (strain Sd197), this protein is ATP-dependent RNA helicase RhlB.